We begin with the raw amino-acid sequence, 232 residues long: MAKVGKRTRSAREAFVGKDLISVEDAVALIKQAASAKFDETLEVAMNLGVDPRHADQMVRGVVTLPNGTGKTVRVAVFARGAKADEAKAAGADIVGAEDLMETIQSGKIEFDRCIATPDMMPLVGRLGKILGPRNLMPNPKVGTVTMDVKSAVEAAKGGEVQFKVEKAGVIHAGVGKMSFEADKLAQNVRAFVDAVNRAKPAGAKGTYLKKVSLSSTMGPGVSVDLTSATSH.

Belongs to the universal ribosomal protein uL1 family. Part of the 50S ribosomal subunit.

Functionally, binds directly to 23S rRNA. The L1 stalk is quite mobile in the ribosome, and is involved in E site tRNA release. Its function is as follows. Protein L1 is also a translational repressor protein, it controls the translation of the L11 operon by binding to its mRNA. The chain is Large ribosomal subunit protein uL1 from Cereibacter sphaeroides (strain ATCC 17029 / ATH 2.4.9) (Rhodobacter sphaeroides).